We begin with the raw amino-acid sequence, 178 residues long: Cytochrome b6-f complex iron-sulfur subunit (178 aa).

A helical transmembrane segment spans residues 20–42 (LLTFGTATGVALGALYPVANYFM). Positions 65-161 (KTGWLATHQA…VDIEDDAVLV (97 aa)) constitute a Rieske domain. Residues Cys107, His109, Cys125, and His128 each contribute to the [2Fe-2S] cluster site. Cys112 and Cys127 are oxidised to a cystine.

It belongs to the Rieske iron-sulfur protein family. The 4 large subunits of the cytochrome b6-f complex are cytochrome b6, subunit IV (17 kDa polypeptide, PetD), cytochrome f and the Rieske protein, while the 4 small subunits are PetG, PetL, PetM and PetN. The complex functions as a dimer. The cofactor is [2Fe-2S] cluster.

It localises to the cellular thylakoid membrane. The enzyme catalyses 2 oxidized [plastocyanin] + a plastoquinol + 2 H(+)(in) = 2 reduced [plastocyanin] + a plastoquinone + 4 H(+)(out). Functionally, component of the cytochrome b6-f complex, which mediates electron transfer between photosystem II (PSII) and photosystem I (PSI), cyclic electron flow around PSI, and state transitions. This chain is Cytochrome b6-f complex iron-sulfur subunit, found in Prochlorococcus marinus (strain MIT 9301).